We begin with the raw amino-acid sequence, 186 residues long: Large ribosomal subunit protein uL5c (186 aa).

This sequence belongs to the universal ribosomal protein uL5 family. As to quaternary structure, part of the 50S ribosomal subunit; contacts the 5S rRNA.

The protein resides in the plastid. Its subcellular location is the chloroplast. In terms of biological role, binds 5S rRNA, forms part of the central protuberance of the 50S subunit. This Pleurastrum terricola (Filamentous green alga) protein is Large ribosomal subunit protein uL5c (rpl5).